We begin with the raw amino-acid sequence, 348 residues long: MLPTRDCVRQTPAYTPGEQPQTAGFTKLNTNENPYPPPAEIFAHLQEQLEKVRLYPDPISKELRQTAAELYGIAADQIIAGNGSDDILNIALRTFVNPCESVAFLDLTYSLYETIARVHGANIIEFPTNDKFALEGPIICPEAKLIFLASPNPPLGKHLDRDYLEATCANASGLVLIDEAYVDFSDDNHLDFLSRYDNVIISRTMSKSYSLAGLRVGFGFASRAIIEQMDKVRDSYNLDRIAQTLATAALKHHNYFEQVWQKVRQTRGRLITSLRELGFIVFDSEANFILASPPQISASELYNQLKERQILVRYFKHPRIQNYVRISIGTDGEIDRLLSAIQEIMGTN.

A disordered region spans residues 1-31 (MLPTRDCVRQTPAYTPGEQPQTAGFTKLNTN). Polar residues predominate over residues 18–31 (EQPQTAGFTKLNTN). Residue Lys207 is modified to N6-(pyridoxal phosphate)lysine.

It belongs to the class-II pyridoxal-phosphate-dependent aminotransferase family. Histidinol-phosphate aminotransferase subfamily. As to quaternary structure, homodimer. Pyridoxal 5'-phosphate is required as a cofactor.

The enzyme catalyses L-histidinol phosphate + 2-oxoglutarate = 3-(imidazol-4-yl)-2-oxopropyl phosphate + L-glutamate. It functions in the pathway amino-acid biosynthesis; L-histidine biosynthesis; L-histidine from 5-phospho-alpha-D-ribose 1-diphosphate: step 7/9. This is Histidinol-phosphate aminotransferase from Microcystis aeruginosa (strain NIES-843 / IAM M-2473).